Here is a 714-residue protein sequence, read N- to C-terminus: EtfAB:quinone oxidoreductase (714 aa).

The next 6 membrane-spanning stretches (helical) occupy residues 25 to 45 (YEWL…FGFW), 87 to 107 (AGWM…AAGI), 125 to 145 (IGFS…VMVL), 164 to 184 (DGWI…IEGL), 207 to 227 (PFGW…MLMW), and 236 to 256 (MAIA…HIFA). 2 4Fe-4S ferredoxin-type domains span residues 293–324 (WKDL…LNPK) and 375–405 (YDVV…HIPK). The [4Fe-4S] cluster site is built by Cys-302, Cys-305, Cys-308, Cys-312, Cys-386, Cys-389, Cys-392, and Cys-396.

Might constitute a membrane-associated complex with EtfA (Swol_0697), EtfB (Swol_0696), and the butyryl-CoA dehydrogenase Swol_1933 and/or Swol_2052. The cofactor is [4Fe-4S] cluster.

Its subcellular location is the cell membrane. It functions in the pathway lipid metabolism; butanoate metabolism. In terms of biological role, oxidoreductase involved in syntrophic growth of S.wolfei with butyrate. Is presumed to link the electron flow from butyryl-CoA dehydrogenases to the membrane, in conjunction with the electron transfer flavoprotein EtfAB. May transfer electrons to the menaquinone pool of the membrane. The sequence is that of EtfAB:quinone oxidoreductase from Syntrophomonas wolfei subsp. wolfei (strain DSM 2245B / Goettingen).